The primary structure comprises 375 residues: Chaperone protein DnaJ (375 aa).

Residues 4–69 enclose the J domain; sequence DLYETLGVQK…QKRAAYDRYG (66 aa). The CR-type zinc finger occupies 133–211; it reads GKTAQIRVPT…CHGQGRVVEE (79 aa). Zn(2+)-binding residues include Cys146, Cys149, Cys163, Cys166, Cys185, Cys188, Cys199, and Cys202. 4 CXXCXGXG motif repeats span residues 146–153, 163–170, 185–192, and 199–206; these read CDVCTGTG, CGTCQGTG, CPTCGGRG, and CTKCHGQG.

This sequence belongs to the DnaJ family. Homodimer. Zn(2+) serves as cofactor.

The protein resides in the cytoplasm. Functionally, participates actively in the response to hyperosmotic and heat shock by preventing the aggregation of stress-denatured proteins and by disaggregating proteins, also in an autonomous, DnaK-independent fashion. Unfolded proteins bind initially to DnaJ; upon interaction with the DnaJ-bound protein, DnaK hydrolyzes its bound ATP, resulting in the formation of a stable complex. GrpE releases ADP from DnaK; ATP binding to DnaK triggers the release of the substrate protein, thus completing the reaction cycle. Several rounds of ATP-dependent interactions between DnaJ, DnaK and GrpE are required for fully efficient folding. Also involved, together with DnaK and GrpE, in the DNA replication of plasmids through activation of initiation proteins. The protein is Chaperone protein DnaJ of Sinorhizobium medicae (strain WSM419) (Ensifer medicae).